The chain runs to 475 residues: Sulfate adenylyltransferase subunit 1 (475 aa).

One can recognise a tr-type G domain in the interval 25–239 (KSLLRFLTCG…EVLETVEIQR (215 aa)). Residues 34 to 41 (GSVDDGKS) are G1. 34–41 (GSVDDGKS) is a GTP binding site. Residues 92-96 (GITID) are G2. The segment at 113 to 116 (DTPG) is G3. GTP-binding positions include 113–117 (DTPGH) and 168–171 (NKMD). The segment at 168–171 (NKMD) is G4. The G5 stretch occupies residues 206–208 (SAL).

It belongs to the TRAFAC class translation factor GTPase superfamily. Classic translation factor GTPase family. CysN/NodQ subfamily. In terms of assembly, heterodimer composed of CysD, the smaller subunit, and CysN.

The enzyme catalyses sulfate + ATP + H(+) = adenosine 5'-phosphosulfate + diphosphate. It participates in sulfur metabolism; hydrogen sulfide biosynthesis; sulfite from sulfate: step 1/3. Its function is as follows. With CysD forms the ATP sulfurylase (ATPS) that catalyzes the adenylation of sulfate producing adenosine 5'-phosphosulfate (APS) and diphosphate, the first enzymatic step in sulfur assimilation pathway. APS synthesis involves the formation of a high-energy phosphoric-sulfuric acid anhydride bond driven by GTP hydrolysis by CysN coupled to ATP hydrolysis by CysD. This chain is Sulfate adenylyltransferase subunit 1, found in Escherichia fergusonii (strain ATCC 35469 / DSM 13698 / CCUG 18766 / IAM 14443 / JCM 21226 / LMG 7866 / NBRC 102419 / NCTC 12128 / CDC 0568-73).